The chain runs to 513 residues: QWRF motif-containing protein 9 (513 aa).

3 stretches are compositionally biased toward polar residues: residues 1–26 (MTAATISPSFNANVKQNKPPSFPSES), 43–55 (GTSSFFHQSSPKR), and 65–78 (VTPSSVATNRPQST). Disordered stretches follow at residues 1 to 89 (MTAA…RREV), 115 to 144 (GTLERRKTTSSATISKSGGGKQEKLKLSDQ), and 184 to 293 (VSNR…LRVR). Residues 79–89 (PRRESLDRREV) are compositionally biased toward basic and acidic residues. 2 stretches are compositionally biased toward polar residues: residues 202–211 (ESVSSGSSNG) and 244–262 (VDSSVLSPKEANSLSSPRG). The QWRF motif signature appears at 334–337 (QWQF).

The protein belongs to the QWRF family.

In Arabidopsis thaliana (Mouse-ear cress), this protein is QWRF motif-containing protein 9 (QWRF9).